Consider the following 45-residue polypeptide: uncharacterized protein (45 aa).

Residues 10 to 27 (LLYFVLFVDIYGIFTNNI) traverse the membrane as a helical segment.

The protein resides in the membrane. This is an uncharacterized protein from Dictyostelium discoideum (Social amoeba).